Here is a 584-residue protein sequence, read N- to C-terminus: A-type ATP synthase subunit A 2 (584 aa).

Residue 227-234 coordinates ATP; that stretch reads GGFGTGKT.

Belongs to the ATPase alpha/beta chains family. In terms of assembly, has multiple subunits with at least A(3), B(3), C, D, E, F, H, I and proteolipid K(x).

Its subcellular location is the cell membrane. The enzyme catalyses ATP + H2O + 4 H(+)(in) = ADP + phosphate + 5 H(+)(out). Component of the A-type ATP synthase that produces ATP from ADP in the presence of a proton gradient across the membrane. The A chain is the catalytic subunit. The chain is A-type ATP synthase subunit A 2 from Methanospirillum hungatei JF-1 (strain ATCC 27890 / DSM 864 / NBRC 100397 / JF-1).